The following is a 498-amino-acid chain: Probable malate:quinone oxidoreductase 2 (498 aa).

It belongs to the MQO family. Requires FAD as cofactor.

It catalyses the reaction (S)-malate + a quinone = a quinol + oxaloacetate. The protein operates within carbohydrate metabolism; tricarboxylic acid cycle; oxaloacetate from (S)-malate (quinone route): step 1/1. This is Probable malate:quinone oxidoreductase 2 from Staphylococcus aureus (strain MW2).